The sequence spans 711 residues: Early transcription factor 82 kDa subunit (711 aa).

The protein belongs to the poxviridae VETF large subunit family. In terms of assembly, heterodimer of a 70 kDa and a 82 kDa subunit. Part of the early transcription complex composed of ETF, RAP94, and the DNA-directed RNA polymerase.

Its function is as follows. Acts with RNA polymerase to initiate transcription from early gene promoters. Is recruited by the RPO-associated protein of 94 kDa (RAP94) to form the early transcription complex, which also contains the core RNA polymerase. ETF heterodimer binds to early gene promoters. The sequence is that of Early transcription factor 82 kDa subunit (VETFL) from Oryctolagus cuniculus (Rabbit).